The chain runs to 314 residues: MSRPRRRGRDIHGVLLLDKPQGMSSNDVLQKVKRIYNANRAGHTGALDPLATGMLPICLGEATKFSQYLLDSDKRYRVIARLGQRTDTSDADGQIVQERPVTFSAGQLASALETFRGDIEQIPSMYSALKYQGKKLYEYARLGIEVPREARPITVYELLFIRHEGNELELEVHCSKGTYIRTIIDDLGEKLGCGAHVIYLRRLTVSKYPVERMVTLEHLQALAAQAEQQGVPAAQLLDPLLMPMDSPASDYPVVNLPLTSSVYFKNGNPVRTSGAPLNGLVRVTEGEDGKFIGMGEIDDEGRVAPRRLVVEHPA.

A substrate-binding site is contributed by His-43. Residue Asp-48 is the Nucleophile of the active site. Substrate is bound by residues Tyr-76, Tyr-179, and Leu-200.

This sequence belongs to the pseudouridine synthase TruB family. Type 1 subfamily.

The enzyme catalyses uridine(55) in tRNA = pseudouridine(55) in tRNA. Responsible for synthesis of pseudouridine from uracil-55 in the psi GC loop of transfer RNAs. This is tRNA pseudouridine synthase B from Salmonella arizonae (strain ATCC BAA-731 / CDC346-86 / RSK2980).